A 233-amino-acid chain; its full sequence is UPF0725 protein At4g17990 (233 aa).

Belongs to the UPF0725 (EMB2204) family.

This chain is UPF0725 protein At4g17990, found in Arabidopsis thaliana (Mouse-ear cress).